The sequence spans 557 residues: Probable protein kinase UbiB (557 aa).

One can recognise a Protein kinase domain in the interval 121-509 (SFDTVPLASA…RKLQTRVVTA (389 aa)). Residues 127–135 (LASASIAQV) and Lys154 contribute to the ATP site. Residue Asp289 is the Proton acceptor of the active site. Helical transmembrane passes span 506-526 (VVTAITGSGLLVVAAVLYGLH) and 535-555 (VPVWSWISGGAGSAALLVAWL).

The protein belongs to the ABC1 family. UbiB subfamily.

It localises to the cell inner membrane. The protein operates within cofactor biosynthesis; ubiquinone biosynthesis [regulation]. In terms of biological role, is probably a protein kinase regulator of UbiI activity which is involved in aerobic coenzyme Q (ubiquinone) biosynthesis. In Xanthomonas oryzae pv. oryzae (strain MAFF 311018), this protein is Probable protein kinase UbiB.